Here is a 1378-residue protein sequence, read N- to C-terminus: DNA-directed RNA polymerase subunit beta (1378 aa).

This sequence belongs to the RNA polymerase beta chain family. In terms of assembly, the RNAP catalytic core consists of 2 alpha, 1 beta, 1 beta' and 1 omega subunit. When a sigma factor is associated with the core the holoenzyme is formed, which can initiate transcription.

It catalyses the reaction RNA(n) + a ribonucleoside 5'-triphosphate = RNA(n+1) + diphosphate. DNA-dependent RNA polymerase catalyzes the transcription of DNA into RNA using the four ribonucleoside triphosphates as substrates. This chain is DNA-directed RNA polymerase subunit beta, found in Agrobacterium fabrum (strain C58 / ATCC 33970) (Agrobacterium tumefaciens (strain C58)).